The following is a 205-amino-acid chain: Small heat shock protein hspG12 (205 aa).

Residues Lys35–Asn205 enclose the sHSP domain. Residues Pro99 to Glu147 are disordered. Residues Ala109 to Asp118 are compositionally biased toward acidic residues. Over residues Lys134–Glu147 the composition is skewed to basic and acidic residues.

It belongs to the small heat shock protein (HSP20) family.

This chain is Small heat shock protein hspG12 (hspG12), found in Dictyostelium discoideum (Social amoeba).